The following is a 559-amino-acid chain: MAETDGSIPLIPVRMLNEHVYCPRLAYLMWVQGEFSHNEFTVDGVIRHRRVDAGGGVLPSETQEDSRIHARSVSLSSERLGITAKIDLVEGEGAYVSPVDYKRGKRPHVAGGAYEPERVQLCAQGLLLREHGFASDGGALYFVASRERVPVAFDDELIGRTLAAIDEMGRTALSGTMPPPLEDSPKCPRCSLVGICLPDEVRFLSHLSVEPRPIIPADGRGLPLYVQSPKAYVRKDGDCLVIEEERVRVAEARLGETSQVALFGNATLTTAALHECLRREIPVTWLSYGGWFMGHTVSTGHRNVETRTYQYQRSFDPETCLNLARRWIVAKIANCRTLLRRNWRGEGDEAKAPPGLLMSLQDDMRHAMRAPSLEVLLGIEGASAGRYFQHFSRMLRGGDGEGMGFDFTTRNRRPPKDPVNALLSFAYAMLTREWTVALAAVGLDPYRGFYHQPRFGRPALALDMMEPFRPLIADSTVLMAINNGEIRTGDFVRSAGGCNLTDSARKRFIAGFERRMEQEVTHPIFKYTISYRRLLEVQARLLTRYLSGEIPAYPNFVTR.

The interval 1–198 (MAETDGSIPL…RCSLVGICLP (198 aa)) is CRISPR-associated exonuclease Cas4. Residue Cys22 participates in [4Fe-4S] cluster binding. Residues Asp87 and Asp100 each coordinate Mn(2+). [4Fe-4S] cluster contacts are provided by Cys187, Cys190, and Cys196. A CRISPR-associated endonuclease Cas1 region spans residues 224–559 (LYVQSPKAYV…IPAYPNFVTR (336 aa)). Glu380, His451, and Glu466 together coordinate Mn(2+).

This sequence in the N-terminal section; belongs to the CRISPR-associated exonuclease Cas4 family. In the C-terminal section; belongs to the CRISPR-associated endonuclease Cas1 family. In terms of assembly, homodimer, forms a heterotetramer with a Cas2 homodimer. The cofactor is [4Fe-4S] cluster. It depends on Mg(2+) as a cofactor. Requires Mn(2+) as cofactor.

It carries out the reaction exonucleolytic cleavage in the 5'- to 3'-direction to yield nucleoside 3'-phosphates.. Functionally, CRISPR (clustered regularly interspaced short palindromic repeat), is an adaptive immune system that provides protection against mobile genetic elements (viruses, transposable elements and conjugative plasmids). CRISPR clusters contain spacers, sequences complementary to antecedent mobile elements, and target invading nucleic acids. CRISPR clusters are transcribed and processed into CRISPR RNA (crRNA). The Cas4 region acts as a ssDNA exonuclease, while the Cas1 region acts as a dsDNA endonuclease. Involved in the integration of spacer DNA into the CRISPR cassette. This chain is CRISPR-associated exonuclease Cas4/endonuclease Cas1 fusion (cas4-cas1), found in Geobacter sulfurreducens (strain ATCC 51573 / DSM 12127 / PCA).